A 339-amino-acid chain; its full sequence is tRNA dimethylallyltransferase (339 aa).

ATP is bound at residue 36–43 (GPTGSGKT). 38–43 (TGSGKT) is a binding site for substrate. The segment at 61–64 (DSMQ) is interaction with substrate tRNA.

Belongs to the IPP transferase family. In terms of assembly, monomer. Mg(2+) serves as cofactor.

The enzyme catalyses adenosine(37) in tRNA + dimethylallyl diphosphate = N(6)-dimethylallyladenosine(37) in tRNA + diphosphate. Functionally, catalyzes the transfer of a dimethylallyl group onto the adenine at position 37 in tRNAs that read codons beginning with uridine, leading to the formation of N6-(dimethylallyl)adenosine (i(6)A). The sequence is that of tRNA dimethylallyltransferase from Chlamydia trachomatis serovar L2 (strain ATCC VR-902B / DSM 19102 / 434/Bu).